Here is a 40-residue protein sequence, read N- to C-terminus: Photosystem II reaction center protein J (40 aa).

The helical transmembrane segment at 10-30 (LWIIGTVTGILVIGLIGIFFF) threads the bilayer.

This sequence belongs to the PsbJ family. In terms of assembly, PSII is composed of 1 copy each of membrane proteins PsbA, PsbB, PsbC, PsbD, PsbE, PsbF, PsbH, PsbI, PsbJ, PsbK, PsbL, PsbM, PsbT, PsbX, PsbY, PsbZ, Psb30/Ycf12, at least 3 peripheral proteins of the oxygen-evolving complex and a large number of cofactors. It forms dimeric complexes.

It is found in the plastid membrane. In terms of biological role, one of the components of the core complex of photosystem II (PSII). PSII is a light-driven water:plastoquinone oxidoreductase that uses light energy to abstract electrons from H(2)O, generating O(2) and a proton gradient subsequently used for ATP formation. It consists of a core antenna complex that captures photons, and an electron transfer chain that converts photonic excitation into a charge separation. This Cuscuta exaltata (Tall dodder) protein is Photosystem II reaction center protein J.